We begin with the raw amino-acid sequence, 743 residues long: Tegument protein UL46 homolog (743 aa).

Disordered regions lie at residues 437 to 481, 522 to 590, and 693 to 743; these read GCPP…VSSA, HQRS…SGYM, and RVRL…VSSL. Over residues 526 to 552 the composition is skewed to low complexity; the sequence is DSSSSDNSSCSSTETEYITISSTPSPT. 2 stretches are compositionally biased toward polar residues: residues 573–586 and 697–716; these read QPAN…SPAN and GTTT…TPSS. Positions 722 to 743 are enriched in low complexity; it reads RTLSTSESPESSPEQQERVSSL.

The protein belongs to the herpesviridae HHV-1 VP11/12 protein family. In terms of assembly, interacts with VP16.

It localises to the virion tegument. It is found in the host cell membrane. Functionally, abundant tegument protein. Trans-activates the immediate early genes. This Equus caballus (Horse) protein is Tegument protein UL46 homolog.